We begin with the raw amino-acid sequence, 180 residues long: UPF0397 protein SSA_0592 (180 aa).

5 consecutive transmembrane segments (helical) span residues valine 9–threonine 29, leucine 45–isoleucine 65, glycine 72–phenylalanine 92, leucine 113–valine 133, and isoleucine 146–alanine 166.

This sequence belongs to the UPF0397 family.

It localises to the cell membrane. This is UPF0397 protein SSA_0592 from Streptococcus sanguinis (strain SK36).